The following is a 368-amino-acid chain: Probable replication factor C subunit 5 (368 aa).

Position 69 to 76 (69 to 76) interacts with ATP; that stretch reads GPPGTGKT.

Belongs to the activator 1 small subunits family. Heteropentamer of various rfc subunits that forms a complex (RFC) with PCNA in the presence of ATP.

It localises to the nucleus. In terms of biological role, the elongation of primed DNA templates by DNA polymerase delta and epsilon requires the action of the accessory proteins proliferating cell nuclear antigen (PCNA) and activator 1. The sequence is that of Probable replication factor C subunit 5 from Caenorhabditis elegans.